The following is a 296-amino-acid chain: MCAERLGQFVTLALVFATLDPARGTDSTNPPEGPQDRGSQQKGRLSLQNTAEIQHCLVNAGDVGCGVFECFENNSCEIQGLHGICMTFLHNAGKFDAQGKSFIKDALRCKAHALRHKFGCISRKCPAIREMVYQLQRECYLKHDLCSAAQENVVVIVEMIHFKDLLLHEPYVDLVNLLLTCGEDVREAVTRSVQAQCEQSWGGLCSILSFCTSNIQRPPTAAPEHQPLADRAQLSRPYHRDTDHHLTANRGAKGERGSKSHLHAHARGGAGGQSAQGPSGSSEWEDEQSEYSDIRR.

Positions 1 to 24 (MCAERLGQFVTLALVFATLDPARG) are cleaved as a signal peptide. The interval 22–44 (ARGTDSTNPPEGPQDRGSQQKGR) is disordered. The N-linked (GlcNAc...) asparagine glycan is linked to asparagine 73. The segment at 236–296 (RPYHRDTDHH…EQSEYSDIRR (61 aa)) is disordered. Residues 238–258 (YHRDTDHHLTANRGAKGERGS) are compositionally biased toward basic and acidic residues.

Belongs to the stanniocalcin family. Homodimer; disulfide-linked. In terms of tissue distribution, expressed in a variety of tissues. Strongly expressed in ovary and to a lesser extent in kidney.

The protein localises to the secreted. Functionally, has an anti-hypocalcemic action on calcium and phosphate homeostasis. In Rattus norvegicus (Rat), this protein is Stanniocalcin-2 (Stc2).